The sequence spans 295 residues: Ankyrin repeat and SOCS box protein 17 (295 aa).

The stretch at Ser146 to Asn176 is one ANK repeat. Residues Leu232–Ser295 enclose the SOCS box domain.

Belongs to the ankyrin SOCS box (ASB) family.

It participates in protein modification; protein ubiquitination. In terms of biological role, may be a substrate-recognition component of a SCF-like ECS (Elongin-Cullin-SOCS-box protein) E3 ubiquitin-protein ligase complex which mediates the ubiquitination and subsequent proteasomal degradation of target proteins. The protein is Ankyrin repeat and SOCS box protein 17 (ASB17) of Bos taurus (Bovine).